The following is a 139-amino-acid chain: uncharacterized protein (139 aa).

One can recognise an HIT domain in the interval 5 to 114 (IFCKIINKEL…IPRFKNDGFG (110 aa)). The Histidine triad motif motif lies at 99–103 (HTHFH).

This is an uncharacterized protein from Borreliella burgdorferi (strain ATCC 35210 / DSM 4680 / CIP 102532 / B31) (Borrelia burgdorferi).